The primary structure comprises 143 residues: Large ribosomal subunit protein uL15 (143 aa).

Composition is skewed to basic residues over residues 1 to 13 and 23 to 38; these read MIRKSKKITKMRG and KKHRGAGHRGGRGNAG. The segment at 1–38 is disordered; the sequence is MIRKSKKITKMRGSRTCGYGEAKKHRGAGHRGGRGNAG.

This sequence belongs to the universal ribosomal protein uL15 family. Part of the 50S ribosomal subunit.

Binds to the 23S rRNA. The chain is Large ribosomal subunit protein uL15 from Methanococcus maripaludis (strain C5 / ATCC BAA-1333).